A 384-amino-acid chain; its full sequence is Tryptophan--tRNA ligase (384 aa).

A 'HIGH' region motif is present at residues 81–89 (PSGPMHIGH). The 'KMSKS' region signature appears at 252 to 256 (KMSAS).

This sequence belongs to the class-I aminoacyl-tRNA synthetase family.

Its subcellular location is the cytoplasm. The catalysed reaction is tRNA(Trp) + L-tryptophan + ATP = L-tryptophyl-tRNA(Trp) + AMP + diphosphate + H(+). This Thermococcus sibiricus (strain DSM 12597 / MM 739) protein is Tryptophan--tRNA ligase.